The primary structure comprises 366 residues: tRNA/tmRNA (uracil-C(5))-methyltransferase (366 aa).

5 residues coordinate S-adenosyl-L-methionine: Gln-190, Tyr-218, Asn-223, Glu-239, and Asp-299. Cys-324 functions as the Nucleophile in the catalytic mechanism. The active-site Proton acceptor is Glu-358.

This sequence belongs to the class I-like SAM-binding methyltransferase superfamily. RNA M5U methyltransferase family. TrmA subfamily.

It catalyses the reaction uridine(54) in tRNA + S-adenosyl-L-methionine = 5-methyluridine(54) in tRNA + S-adenosyl-L-homocysteine + H(+). It carries out the reaction uridine(341) in tmRNA + S-adenosyl-L-methionine = 5-methyluridine(341) in tmRNA + S-adenosyl-L-homocysteine + H(+). Dual-specificity methyltransferase that catalyzes the formation of 5-methyluridine at position 54 (m5U54) in all tRNAs, and that of position 341 (m5U341) in tmRNA (transfer-mRNA). This chain is tRNA/tmRNA (uracil-C(5))-methyltransferase, found in Shigella flexneri serotype 5b (strain 8401).